A 363-amino-acid chain; its full sequence is Dihydroorotate dehydrogenase (quinone) (363 aa).

FMN-binding positions include 62 to 66 (AGYDK) and Thr86. Lys66 lines the substrate pocket. Residue 111–115 (NRLGF) coordinates substrate. FMN is bound by residues Asn140 and Asn171. Residue Asn171 coordinates substrate. The active-site Nucleophile is Ser174. Asn176 contributes to the substrate binding site. The FMN site is built by Lys216 and Ser244. Residue 245 to 246 (NT) participates in substrate binding. FMN is bound by residues Gly267, Gly296, and 317–318 (YS).

The protein belongs to the dihydroorotate dehydrogenase family. Type 2 subfamily. As to quaternary structure, monomer. It depends on FMN as a cofactor.

It localises to the cell membrane. The catalysed reaction is (S)-dihydroorotate + a quinone = orotate + a quinol. It participates in pyrimidine metabolism; UMP biosynthesis via de novo pathway; orotate from (S)-dihydroorotate (quinone route): step 1/1. Its function is as follows. Catalyzes the conversion of dihydroorotate to orotate with quinone as electron acceptor. The polypeptide is Dihydroorotate dehydrogenase (quinone) (Allorhizobium ampelinum (strain ATCC BAA-846 / DSM 112012 / S4) (Agrobacterium vitis (strain S4))).